The following is a 277-amino-acid chain: Glycerol-3-phosphate acyltransferase (277 aa).

5 consecutive transmembrane segments (helical) span residues 3 to 23 (LFIF…AIIV), 55 to 75 (IMVM…AKLL), 79 to 99 (PVTV…PVFF), 111 to 131 (IGAL…TWLL), and 155 to 175 (LILV…ILVL). The tract at residues 207 to 277 (SPATSAEQEF…PKTKTVKEKE (71 aa)) is disordered. Basic and acidic residues predominate over residues 216 to 239 (FPGKEVIDTNIDETEKTEQAEAVK). Basic residues-rich tracts occupy residues 240–253 (KPKA…AKKT) and 262–271 (KPRSTKPKTK).

This sequence belongs to the PlsY family. In terms of assembly, probably interacts with PlsX.

The protein localises to the cell inner membrane. It carries out the reaction an acyl phosphate + sn-glycerol 3-phosphate = a 1-acyl-sn-glycero-3-phosphate + phosphate. It functions in the pathway lipid metabolism; phospholipid metabolism. Catalyzes the transfer of an acyl group from acyl-phosphate (acyl-PO(4)) to glycerol-3-phosphate (G3P) to form lysophosphatidic acid (LPA). This enzyme utilizes acyl-phosphate as fatty acyl donor, but not acyl-CoA or acyl-ACP. This chain is Glycerol-3-phosphate acyltransferase, found in Legionella pneumophila (strain Paris).